The sequence spans 140 residues: Large ribosomal subunit protein uL14 (140 aa).

This sequence belongs to the universal ribosomal protein uL14 family. Part of the 50S ribosomal subunit. Forms a cluster with proteins L3 and L24e, part of which may contact the 16S rRNA in 2 intersubunit bridges.

Binds to 23S rRNA. Forms part of two intersubunit bridges in the 70S ribosome. The polypeptide is Large ribosomal subunit protein uL14 (Aeropyrum pernix (strain ATCC 700893 / DSM 11879 / JCM 9820 / NBRC 100138 / K1)).